The primary structure comprises 686 residues: ATP-dependent zinc metalloprotease FtsH 2 (686 aa).

Over 1–11 the chain is Cytoplasmic; that stretch reads MKKNIKDIFKN. Residues 12–32 traverse the membrane as a helical segment; it reads FNIFWFCFIFLLLSLLYCLIM. The Extracellular portion of the chain corresponds to 33–178; it reads MEISHQHDNN…LQRIPYQPYF (146 aa). Residues 179–199 traverse the membrane as a helical segment; the sequence is GFAPFISAVNICILIIIFYFI. Over 200–686 the chain is Cytoplasmic; sequence YNSIEKTSAQ…QKSEKEDCNK (487 aa). 272–279 contributes to the ATP binding site; sequence GPPGVGKT. Histidine 493 contacts Zn(2+). Residue glutamate 494 is part of the active site. Zn(2+) contacts are provided by histidine 497 and aspartate 569.

It in the central section; belongs to the AAA ATPase family. The protein in the C-terminal section; belongs to the peptidase M41 family. As to quaternary structure, homohexamer. Zn(2+) is required as a cofactor.

It is found in the cell membrane. Acts as a processive, ATP-dependent zinc metallopeptidase for both cytoplasmic and membrane proteins. Plays a role in the quality control of integral membrane proteins. This Phytoplasma mali (strain AT) protein is ATP-dependent zinc metalloprotease FtsH 2.